A 288-amino-acid polypeptide reads, in one-letter code: Syntaxin-1B (288 aa).

A compositionally biased stretch (basic and acidic residues) spans 1-13 (MKDRTQELRSAKD). The tract at residues 1-20 (MKDRTQELRSAKDSDDEEEV) is disordered. Topologically, residues 1-264 (MKDRTQELRS…KYQSKARRKK (264 aa)) are cytoplasmic. A phosphoserine mark is found at S10 and S14. Positions 29 to 104 (MDEFFEQVEE…IEQSIEQEEG (76 aa)) form a coiled coil. Residues 191–253 (LNEIETRHNE…ERAVSDTKKA (63 aa)) enclose the t-SNARE coiled-coil homology domain. Residues 265-288 (IMIIICCVVLGVVLASSIGGTLGL) traverse the membrane as a helical; Anchor for type IV membrane protein segment.

Belongs to the syntaxin family. As to quaternary structure, interacts with OTOF. Interacts with SYT6 and SYT8; the interaction is Ca(2+)-dependent. Post-translationally, phosphorylated by CK2.

It is found in the membrane. The protein localises to the nucleus. The protein resides in the cytoplasm. It localises to the cytoskeleton. Its subcellular location is the microtubule organizing center. It is found in the centrosome. The protein localises to the spindle. Its function is as follows. Potentially involved in docking of synaptic vesicles at presynaptic active zones. May mediate Ca(2+)-regulation of exocytosis acrosomal reaction in sperm. This Homo sapiens (Human) protein is Syntaxin-1B (STX1B).